The sequence spans 180 residues: ATP-dependent protease subunit HslV (180 aa).

Thr-5 is an active-site residue. Na(+) is bound by residues Gly-165, Cys-168, and Thr-171.

Belongs to the peptidase T1B family. HslV subfamily. As to quaternary structure, a double ring-shaped homohexamer of HslV is capped on each side by a ring-shaped HslU homohexamer. The assembly of the HslU/HslV complex is dependent on binding of ATP.

It is found in the cytoplasm. The enzyme catalyses ATP-dependent cleavage of peptide bonds with broad specificity.. Its activity is regulated as follows. Allosterically activated by HslU binding. Its function is as follows. Protease subunit of a proteasome-like degradation complex believed to be a general protein degrading machinery. The sequence is that of ATP-dependent protease subunit HslV from Helicobacter acinonychis (strain Sheeba).